The sequence spans 412 residues: Gamma-glutamyl phosphate reductase (412 aa).

This sequence belongs to the gamma-glutamyl phosphate reductase family.

The protein localises to the cytoplasm. It carries out the reaction L-glutamate 5-semialdehyde + phosphate + NADP(+) = L-glutamyl 5-phosphate + NADPH + H(+). Its pathway is amino-acid biosynthesis; L-proline biosynthesis; L-glutamate 5-semialdehyde from L-glutamate: step 2/2. Functionally, catalyzes the NADPH-dependent reduction of L-glutamate 5-phosphate into L-glutamate 5-semialdehyde and phosphate. The product spontaneously undergoes cyclization to form 1-pyrroline-5-carboxylate. In Lactiplantibacillus plantarum (strain ATCC BAA-793 / NCIMB 8826 / WCFS1) (Lactobacillus plantarum), this protein is Gamma-glutamyl phosphate reductase.